The following is a 137-amino-acid chain: Large ribosomal subunit protein uL16 (137 aa).

The protein belongs to the universal ribosomal protein uL16 family. Part of the 50S ribosomal subunit.

Functionally, binds 23S rRNA and is also seen to make contacts with the A and possibly P site tRNAs. The protein is Large ribosomal subunit protein uL16 of Streptococcus sanguinis (strain SK36).